A 415-amino-acid chain; its full sequence is Nuclear hormone receptor family member nhr-153 (415 aa).

A DNA-binding region (nuclear receptor) is located at residues 26–105; the sequence is PSVCQICRNP…AGMNPMAIQA (80 aa). 2 consecutive NR C4-type zinc fingers follow at residues 29–49 and 65–88; these read CQIC…CNGC and CFKV…CRAC. An NR LBD domain is found at 170–406; sequence DQRDLSTALS…DPEVLKKKCI (237 aa).

Belongs to the nuclear hormone receptor family.

It is found in the nucleus. Orphan nuclear receptor. The polypeptide is Nuclear hormone receptor family member nhr-153 (nhr-153) (Caenorhabditis elegans).